The sequence spans 192 residues: Epididymal-specific lipocalin-12 (192 aa).

An N-terminal signal peptide occupies residues M1–A19. A disulfide bridge links C88 with C192.

The protein belongs to the calycin superfamily. Lipocalin family. As to quaternary structure, monomer.

Its subcellular location is the secreted. In terms of biological role, binds all-trans retinoic acid and may act as a retinoid carrier protein within the epididymis. May play a role in male fertility. In Homo sapiens (Human), this protein is Epididymal-specific lipocalin-12 (LCN12).